Consider the following 247-residue polypeptide: ATP synthase subunit a, chloroplastic (247 aa).

5 helical membrane-spanning segments follow: residues 38–58 (QVLI…IVTV), 95–115 (VPFI…GALL), 134–154 (INTT…AGLS), 199–219 (LVVV…VMFL), and 220–240 (GLFT…AYIG).

It belongs to the ATPase A chain family. As to quaternary structure, F-type ATPases have 2 components, CF(1) - the catalytic core - and CF(0) - the membrane proton channel. CF(1) has five subunits: alpha(3), beta(3), gamma(1), delta(1), epsilon(1). CF(0) has four main subunits: a, b, b' and c.

The protein resides in the plastid. The protein localises to the chloroplast thylakoid membrane. Functionally, key component of the proton channel; it plays a direct role in the translocation of protons across the membrane. The sequence is that of ATP synthase subunit a, chloroplastic from Populus alba (White poplar).